The following is a 185-amino-acid chain: Elongation factor P (185 aa).

Belongs to the elongation factor P family.

The protein localises to the cytoplasm. The protein operates within protein biosynthesis; polypeptide chain elongation. Functionally, involved in peptide bond synthesis. Stimulates efficient translation and peptide-bond synthesis on native or reconstituted 70S ribosomes in vitro. Probably functions indirectly by altering the affinity of the ribosome for aminoacyl-tRNA, thus increasing their reactivity as acceptors for peptidyl transferase. This chain is Elongation factor P, found in Paraburkholderia xenovorans (strain LB400).